A 1033-amino-acid polypeptide reads, in one-letter code: Putative U-box domain-containing protein 42 (1033 aa).

Residues 145 to 226 (SQSQMTDIPD…SSNASSQRKY (82 aa)) are disordered. Residues 200–226 (LSKSQSQSTEIPDIPSQSSNASSQRKY) are compositionally biased toward polar residues. In terms of domain architecture, U-box spans 245–322 (PPYQAFICPL…QEWKVRNEAA (78 aa)). 5 ARM repeats span residues 483–522 (PENI…EIDI), 523–562 (GHEK…HISL), 564–608 (HPNN…NILE), 610–659 (GLEH…SLSK), and 665–704 (ATIV…ALTP).

It catalyses the reaction S-ubiquitinyl-[E2 ubiquitin-conjugating enzyme]-L-cysteine + [acceptor protein]-L-lysine = [E2 ubiquitin-conjugating enzyme]-L-cysteine + N(6)-ubiquitinyl-[acceptor protein]-L-lysine.. Its pathway is protein modification; protein ubiquitination. Functions as an E3 ubiquitin ligase. This Arabidopsis thaliana (Mouse-ear cress) protein is Putative U-box domain-containing protein 42 (PUB42).